The following is a 396-amino-acid chain: Putative F-box/kelch-repeat protein At4g11770 (396 aa).

The region spanning 9–55 (PCNMPYLPDDLLLNILGRVSRLYYPILSLVSKRFRSLVGSLELYKIR) is the F-box domain. Kelch repeat units follow at residues 151-197 (YIYM…VLDG), 198-248 (KIYV…YEEK), and 250-296 (YLFG…VFYK).

This chain is Putative F-box/kelch-repeat protein At4g11770, found in Arabidopsis thaliana (Mouse-ear cress).